Consider the following 447-residue polypeptide: GTPase Der (447 aa).

EngA-type G domains follow at residues 4–165 and 180–357; these read QIIA…PKEK and VQIV…KNWN. GTP contacts are provided by residues 10-17, 57-61, 119-122, 186-193, 233-237, and 298-301; these read GRPNVGKS, DTPGL, NKCE, GRPNAGKS, DTAGL, and NKWD. In terms of domain architecture, KH-like spans 358–443; that stretch reads KKITTSKLNE…PIRFAYVKTK (86 aa).

Belongs to the TRAFAC class TrmE-Era-EngA-EngB-Septin-like GTPase superfamily. EngA (Der) GTPase family. In terms of assembly, associates with the 50S ribosomal subunit.

In terms of biological role, GTPase that plays an essential role in the late steps of ribosome biogenesis. The chain is GTPase Der from Rickettsia canadensis (strain McKiel).